Consider the following 1030-residue polypeptide: Protein KRBA1 (1030 aa).

Disordered regions lie at residues 27 to 56 (EPGRAVGGGSHADEGQEPAGCGDPQGGQPR), 80 to 208 (KGAM…NSPL), 225 to 255 (HPETSPSFLPPLPSLGTSRLTRADLGPGSPP), 281 to 505 (EAQD…GLEN), and 634 to 788 (GGPS…PASS). At serine 101 the chain carries Phosphoserine. A compositionally biased stretch (low complexity) spans 102-114 (PEAAAAREPCPLR). Over residues 124 to 143 (PTSQPHLATTPTDSSCSSGP) the composition is skewed to polar residues. A compositionally biased stretch (basic and acidic residues) spans 157–168 (TADKPWPTRKEG). A phosphoserine mark is found at serine 177, serine 182, serine 184, serine 229, serine 253, and serine 355. The span at 372–389 (PEAQAASASSSPLEALEA) shows a compositional bias: low complexity. A compositionally biased stretch (polar residues) spans 397-418 (NGSSPSQLPPTSCSQNPQPGDS). Residues 419–437 (RSQKPELQPHRSHSEEATR) are compositionally biased toward basic and acidic residues. Low complexity-rich tracts occupy residues 485–502 (QGQHPGKGSPPGSSPLQG) and 642–651 (PGSSSSFSGS). The span at 654–674 (EDPRPEPDLWKPLPQERDRLP) shows a compositional bias: basic and acidic residues. Over residues 689 to 698 (TPAGSSGGSP) the composition is skewed to gly residues. Positions 760 to 784 (QGPPELPSESPPPELPPPEAAPPVL) are enriched in pro residues. Positions 799-832 (LQQELHSLGAALAEKLDRLATALAGLAQEVATMR) form a coiled coil. Residues 870–887 (RHLPYWRQKGPTRPKPKI) show a composition bias toward basic residues. The disordered stretch occupies residues 870–1030 (RHLPYWRQKG…EHRDPRWGAH (161 aa)). Positions 913–923 (PLPPDAPPAEP) are enriched in pro residues. Composition is skewed to low complexity over residues 929–953 (SSSQQLLSSTPSCHAAPPAHPLLAH) and 966–984 (PAALPLQGASPPAASADAD). Over residues 1019 to 1030 (GGEHRDPRWGAH) the composition is skewed to basic and acidic residues.

As to expression, expressed in brain (cerebellum).

The sequence is that of Protein KRBA1 (KRBA1) from Homo sapiens (Human).